A 315-amino-acid chain; its full sequence is Tyrosine recombinase XerC (315 aa).

Residues 1 to 103 (MIASFYAFLD…AIKSFAKFCV (103 aa)) enclose the Core-binding (CB) domain. One can recognise a Tyr recombinase domain in the interval 124–306 (ELPSPLTYEQ…SMKLKKQIHD (183 aa)). Active-site residues include arginine 164, lysine 188, histidine 258, arginine 261, and histidine 284. Catalysis depends on tyrosine 293, which acts as the O-(3'-phospho-DNA)-tyrosine intermediate.

Belongs to the 'phage' integrase family. XerC subfamily. In terms of assembly, forms a cyclic heterotetrameric complex composed of two molecules of XerC and two molecules of XerD.

The protein localises to the cytoplasm. Site-specific tyrosine recombinase, which acts by catalyzing the cutting and rejoining of the recombining DNA molecules. The XerC-XerD complex is essential to convert dimers of the bacterial chromosome into monomers to permit their segregation at cell division. It also contributes to the segregational stability of plasmids. This is Tyrosine recombinase XerC from Chlamydia muridarum (strain MoPn / Nigg).